A 569-amino-acid chain; its full sequence is Glucose-6-phosphate isomerase, cytosolic 2 (569 aa).

Glu-360 (proton donor) is an active-site residue. Active-site residues include His-391 and Lys-516.

This sequence belongs to the GPI family. Homodimer.

Its subcellular location is the cytoplasm. The catalysed reaction is alpha-D-glucose 6-phosphate = beta-D-fructose 6-phosphate. It functions in the pathway carbohydrate degradation; glycolysis; D-glyceraldehyde 3-phosphate and glycerone phosphate from D-glucose: step 2/4. The protein is Glucose-6-phosphate isomerase, cytosolic 2 (PGIC2) of Clarkia concinna (Red ribbons).